Reading from the N-terminus, the 863-residue chain is Aminopeptidase N (863 aa).

Substrate-binding positions include Glu-124 and 263–267; that span reads GAMEN. His-299 lines the Zn(2+) pocket. Glu-300 acts as the Proton acceptor in catalysis. Zn(2+)-binding residues include His-303 and Glu-322.

This sequence belongs to the peptidase M1 family. Zn(2+) serves as cofactor.

The catalysed reaction is Release of an N-terminal amino acid, Xaa-|-Yaa- from a peptide, amide or arylamide. Xaa is preferably Ala, but may be most amino acids including Pro (slow action). When a terminal hydrophobic residue is followed by a prolyl residue, the two may be released as an intact Xaa-Pro dipeptide.. Functionally, aminopeptidase N is involved in the degradation of intracellular peptides generated by protein breakdown during normal growth as well as in response to nutrient starvation. This chain is Aminopeptidase N (pepN), found in Caulobacter vibrioides (strain ATCC 19089 / CIP 103742 / CB 15) (Caulobacter crescentus).